A 175-amino-acid polypeptide reads, in one-letter code: Transcription factor E (175 aa).

The 86-residue stretch at 3–88 folds into the HTH TFE/IIEalpha-type domain; it reads ENPLIQQVLF…TWKPSLEKVP (86 aa).

The protein belongs to the TFE family. As to quaternary structure, monomer. Interaction with RNA polymerase subunits RpoF and RpoE is necessary for Tfe stimulatory transcription activity. Able to interact with Tbp and RNA polymerase in the absence of DNA promoter. Interacts both with the preinitiation and elongation complexes.

In terms of biological role, transcription factor that plays a role in the activation of archaeal genes transcribed by RNA polymerase. Facilitates transcription initiation by enhancing TATA-box recognition by TATA-box-binding protein (Tbp), and transcription factor B (Tfb) and RNA polymerase recruitment. Not absolutely required for transcription in vitro, but particularly important in cases where Tbp or Tfb function is not optimal. It dynamically alters the nucleic acid-binding properties of RNA polymerases by stabilizing the initiation complex and destabilizing elongation complexes. Seems to translocate with the RNA polymerase following initiation and acts by binding to the non template strand of the transcription bubble in elongation complexes. The sequence is that of Transcription factor E from Methanococcus maripaludis (strain DSM 14266 / JCM 13030 / NBRC 101832 / S2 / LL).